The sequence spans 107 residues: MSTAELACSYAALILADDGIEISADKIQTLISAANVQEVEPIWASIFARALEGKDIKELLTNVGSAGPASAAPAGAAGAAAPAEEKAEEKEEEKEESDEDMGFGLFD.

Residues 67-82 show a composition bias toward low complexity; that stretch reads GPASAAPAGAAGAAAP. A disordered region spans residues 67–107; the sequence is GPASAAPAGAAGAAAPAEEKAEEKEEEKEESDEDMGFGLFD. The span at 90–101 shows a compositional bias: acidic residues; sequence KEEEKEESDEDM.

The protein belongs to the eukaryotic ribosomal protein P1/P2 family. As to quaternary structure, P1 and P2 exist as dimers at the large ribosomal subunit.

Its subcellular location is the cytoplasm. Its function is as follows. Plays an important role in the elongation step of protein synthesis. The sequence is that of Large ribosomal subunit protein P1 from Penicillium crustosum (Blue mold fungus).